The primary structure comprises 599 residues: 2-succinyl-5-enolpyruvyl-6-hydroxy-3-cyclohexene-1-carboxylate synthase (599 aa).

A compositionally biased stretch (low complexity) spans 1–21 (MTSENPLDPNNAYAAADDAPL). The tract at residues 1-35 (MTSENPLDPNNAYAAADDAPLSEGDPTGAPADSGS) is disordered.

The protein belongs to the TPP enzyme family. MenD subfamily. As to quaternary structure, homodimer. Mg(2+) is required as a cofactor. Requires Mn(2+) as cofactor. It depends on thiamine diphosphate as a cofactor.

The enzyme catalyses isochorismate + 2-oxoglutarate + H(+) = 5-enolpyruvoyl-6-hydroxy-2-succinyl-cyclohex-3-ene-1-carboxylate + CO2. It functions in the pathway quinol/quinone metabolism; 1,4-dihydroxy-2-naphthoate biosynthesis; 1,4-dihydroxy-2-naphthoate from chorismate: step 2/7. Its pathway is quinol/quinone metabolism; menaquinone biosynthesis. In terms of biological role, catalyzes the thiamine diphosphate-dependent decarboxylation of 2-oxoglutarate and the subsequent addition of the resulting succinic semialdehyde-thiamine pyrophosphate anion to isochorismate to yield 2-succinyl-5-enolpyruvyl-6-hydroxy-3-cyclohexene-1-carboxylate (SEPHCHC). The polypeptide is 2-succinyl-5-enolpyruvyl-6-hydroxy-3-cyclohexene-1-carboxylate synthase (Arthrobacter sp. (strain FB24)).